The following is a 793-amino-acid chain: Kinesin-associated protein 3 (793 aa).

Ser-60 bears the Phosphoserine mark. Basic and acidic residues predominate over residues 103-119 (LPGKEKKEKSSKPKDPP). A disordered region spans residues 103–123 (LPGKEKKEKSSKPKDPPPFEG). ARM repeat units follow at residues 333-373 (FMEN…NLSF), 374-412 (DTGLRNKMVQVGLLPKLTALLGNENYKQIAMCVLYHISM), 494-533 (DGPTKNLFIDYVGDLAAQISSDEEEEFVIECLGTLANLTI), 578-620 (DDSC…QMVF), and 621-662 (HQAT…IIAE).

Interacts with SMC3 subunit of the cohesin complex. Heterotrimer of KIFAP3, KIF3A and KIF3B. Interacts with RAP1GDS1/SMG GDS. In terms of processing, phosphorylated on tyrosine residues by SRC in vitro; this reduces the binding affinity of the protein for RAP1GDS1.

Its function is as follows. Involved in tethering the chromosomes to the spindle pole and in chromosome movement. Binds to the tail domain of the KIF3A/KIF3B heterodimer to form a heterotrimeric KIF3 complex and may regulate the membrane binding of this complex. The polypeptide is Kinesin-associated protein 3 (Kifap3) (Mus musculus (Mouse)).